Consider the following 279-residue polypeptide: GTP cyclohydrolase MptA (279 aa).

It belongs to the GTP cyclohydrolase IV family. Homodimer. Fe(2+) serves as cofactor.

It catalyses the reaction GTP + H2O = 7,8-dihydroneopterin 2',3'-cyclic phosphate + formate + diphosphate + H(+). The protein operates within cofactor biosynthesis; 5,6,7,8-tetrahydromethanopterin biosynthesis. Its function is as follows. Converts GTP to 7,8-dihydro-D-neopterin 2',3'-cyclic phosphate, the first intermediate in the biosynthesis of coenzyme methanopterin. The chain is GTP cyclohydrolase MptA from Korarchaeum cryptofilum (strain OPF8).